A 247-amino-acid polypeptide reads, in one-letter code: uncharacterized protein (247 aa).

4 residues coordinate NAD(+): Leu-19, Asp-38, Asp-63, and Val-64. Ser-142 contributes to the substrate binding site. The NAD(+) site is built by Tyr-155, Lys-159, and Ser-190. Tyr-155 acts as the Proton acceptor in catalysis.

The protein belongs to the short-chain dehydrogenases/reductases (SDR) family.

This is an uncharacterized protein from Mycobacterium bovis (strain ATCC BAA-935 / AF2122/97).